We begin with the raw amino-acid sequence, 226 residues long: N-(5'-phosphoribosyl)anthranilate isomerase 2 (226 aa).

The protein belongs to the TrpF family.

It carries out the reaction N-(5-phospho-beta-D-ribosyl)anthranilate = 1-(2-carboxyphenylamino)-1-deoxy-D-ribulose 5-phosphate. It participates in amino-acid biosynthesis; L-tryptophan biosynthesis; L-tryptophan from chorismate: step 3/5. This Methanosarcina mazei (strain ATCC BAA-159 / DSM 3647 / Goe1 / Go1 / JCM 11833 / OCM 88) (Methanosarcina frisia) protein is N-(5'-phosphoribosyl)anthranilate isomerase 2 (trpF2).